Consider the following 470-residue polypeptide: Fumarate hydratase class II (470 aa).

Residues 99 to 101 (SGT), 129 to 132 (HPND), 139 to 141 (SSN), and Thr-187 each bind substrate. The active-site Proton donor/acceptor is His-188. Residue Ser-318 is part of the active site. Substrate is bound by residues Ser-319 and 324-326 (KIN).

This sequence belongs to the class-II fumarase/aspartase family. Fumarase subfamily. In terms of assembly, homotetramer.

It localises to the cytoplasm. The catalysed reaction is (S)-malate = fumarate + H2O. The protein operates within carbohydrate metabolism; tricarboxylic acid cycle; (S)-malate from fumarate: step 1/1. Involved in the TCA cycle. Catalyzes the stereospecific interconversion of fumarate to L-malate. The sequence is that of Fumarate hydratase class II from Halobacterium salinarum (strain ATCC 700922 / JCM 11081 / NRC-1) (Halobacterium halobium).